The following is a 530-amino-acid chain: Phosphoenolpyruvate carboxykinase (ATP) (530 aa).

Residues R60, Y195, and K201 each contribute to the substrate site. ATP-binding positions include K201, H221, and 237–245; that span reads GLSGTGKTT. K201 and H221 together coordinate Mn(2+). D258 lines the Mn(2+) pocket. Residues E286, R324, and S449 each coordinate ATP. A substrate-binding site is contributed by R324.

Belongs to the phosphoenolpyruvate carboxykinase (ATP) family. Mn(2+) serves as cofactor.

The protein localises to the cytoplasm. It carries out the reaction oxaloacetate + ATP = phosphoenolpyruvate + ADP + CO2. The protein operates within carbohydrate biosynthesis; gluconeogenesis. Involved in the gluconeogenesis. Catalyzes the conversion of oxaloacetate (OAA) to phosphoenolpyruvate (PEP) through direct phosphoryl transfer between the nucleoside triphosphate and OAA. The protein is Phosphoenolpyruvate carboxykinase (ATP) of Geobacter metallireducens (strain ATCC 53774 / DSM 7210 / GS-15).